A 345-amino-acid chain; its full sequence is MKKYLVMEDGTVLSGQGYGSYKEAYGELVFTTSMTGYLETLTDPSYVGQMLVFASPTIANYALEMGKMESNGVKVSALITKDAHIELKKGGYGREFDEFLKEQGIPGIDGIDTRMLVRKIRANGVLRSYVVNDPSHSLDFPDPMNDDLVSKAVPHHDPVFVKGEEGGTVLFIDLGSKNTLKELMLQNFSLIVVDKQTNLDEIEGYDAIFVSNGPGDPSHPSLSNVIKFLSHNIGVKPLFGICFGLQAISLAYGAKTYKMKFGHRGSNHAVTDGTHSYVTTHNHGYAVDGSTVKDFKVIGWDANDGTVEIIEGDDMFAVQFHPEASPGPHDTRWFFGEMKRRIGYA.

Residues 1–169 form a CPSase region; it reads MKKYLVMEDG…FVKGEEGGTV (169 aa). S45, G213, and G215 together coordinate L-glutamine. Residues 168-345 form the Glutamine amidotransferase type-1 domain; it reads TVLFIDLGSK…GEMKRRIGYA (178 aa). C242 (nucleophile) is an active-site residue. Residues F243, Q246, N282, G284, and Y285 each coordinate L-glutamine. Catalysis depends on residues H321 and E323.

This sequence belongs to the CarA family. In terms of assembly, composed of two chains; the small (or glutamine) chain promotes the hydrolysis of glutamine to ammonia, which is used by the large (or ammonia) chain to synthesize carbamoyl phosphate. Tetramer of heterodimers (alpha,beta)4.

The enzyme catalyses hydrogencarbonate + L-glutamine + 2 ATP + H2O = carbamoyl phosphate + L-glutamate + 2 ADP + phosphate + 2 H(+). It catalyses the reaction L-glutamine + H2O = L-glutamate + NH4(+). The protein operates within amino-acid biosynthesis; L-arginine biosynthesis; carbamoyl phosphate from bicarbonate: step 1/1. It participates in pyrimidine metabolism; UMP biosynthesis via de novo pathway; (S)-dihydroorotate from bicarbonate: step 1/3. In terms of biological role, small subunit of the glutamine-dependent carbamoyl phosphate synthetase (CPSase). CPSase catalyzes the formation of carbamoyl phosphate from the ammonia moiety of glutamine, carbonate, and phosphate donated by ATP, constituting the first step of 2 biosynthetic pathways, one leading to arginine and/or urea and the other to pyrimidine nucleotides. The small subunit (glutamine amidotransferase) binds and cleaves glutamine to supply the large subunit with the substrate ammonia. In Thermoplasma volcanium (strain ATCC 51530 / DSM 4299 / JCM 9571 / NBRC 15438 / GSS1), this protein is Carbamoyl phosphate synthase small chain.